A 785-amino-acid polypeptide reads, in one-letter code: uncharacterized protein (785 aa).

In terms of domain architecture, PE spans 1–93 (MSWVMVSPEL…GGAYAAAEAA (93 aa)).

It belongs to the mycobacterial PE family. PGRS subfamily.

This is an uncharacterized protein from Mycobacterium tuberculosis (strain CDC 1551 / Oshkosh).